We begin with the raw amino-acid sequence, 318 residues long: Pyrimidine-specific ribonucleoside hydrolase RihA (318 aa).

His-240 is an active-site residue.

It belongs to the IUNH family. RihA subfamily.

In terms of biological role, hydrolyzes cytidine or uridine to ribose and cytosine or uracil, respectively. The protein is Pyrimidine-specific ribonucleoside hydrolase RihA of Shewanella baltica (strain OS185).